A 670-amino-acid polypeptide reads, in one-letter code: Probable membrane-anchored ferredoxin csal_0991 (670 aa).

The next 5 membrane-spanning stretches (helical) occupy residues 2–22, 68–90, 94–113, 135–155, and 159–179; these read LDIL…IGAV, VATA…LGLA, LGWL…LFVA, LMAF…VLPA, and GWLV…ELVF. 2 4Fe-4S ferredoxin-type domains span residues 241–271 and 316–347; these read WNQL…PLNP and GTAL…HVDA. The [4Fe-4S] cluster site is built by cysteine 250, cysteine 253, cysteine 256, cysteine 260, cysteine 328, cysteine 331, cysteine 334, and cysteine 338. Residues 648–670 are disordered; the sequence is NTPPATPASHDTAASQATEEVLS. Polar residues predominate over residues 659 to 670; the sequence is TAASQATEEVLS.

[4Fe-4S] cluster serves as cofactor.

It localises to the cell inner membrane. Its function is as follows. Participates in the electron transfer process during N,N-dimethylglycine (DMG) degradation to sarcosine. Probably transfers the electrons from N,N-dimethylglycine/sarcosine dehydrogenase (DMGDH) to the electron transfer flavoprotein (ETF) EtfA-EtfB. This is Probable membrane-anchored ferredoxin csal_0991 from Chromohalobacter salexigens (strain ATCC BAA-138 / DSM 3043 / CIP 106854 / NCIMB 13768 / 1H11).